Reading from the N-terminus, the 229-residue chain is Peptidase E (229 aa).

Residues Ser120, Asp135, and His157 each act as charge relay system in the active site.

This sequence belongs to the peptidase S51 family.

The protein localises to the cytoplasm. It carries out the reaction Dipeptidase E catalyzes the hydrolysis of dipeptides Asp-|-Xaa. It does not act on peptides with N-terminal Glu, Asn or Gln, nor does it cleave isoaspartyl peptides.. Functionally, hydrolyzes dipeptides containing N-terminal aspartate residues. May play a role in allowing the cell to use peptide aspartate to spare carbon otherwise required for the synthesis of the aspartate family of amino acids. This chain is Peptidase E, found in Salmonella arizonae (strain ATCC BAA-731 / CDC346-86 / RSK2980).